Consider the following 418-residue polypeptide: Gamma-glutamyl phosphate reductase (418 aa).

It belongs to the gamma-glutamyl phosphate reductase family.

Its subcellular location is the cytoplasm. The enzyme catalyses L-glutamate 5-semialdehyde + phosphate + NADP(+) = L-glutamyl 5-phosphate + NADPH + H(+). It functions in the pathway amino-acid biosynthesis; L-proline biosynthesis; L-glutamate 5-semialdehyde from L-glutamate: step 2/2. In terms of biological role, catalyzes the NADPH-dependent reduction of L-glutamate 5-phosphate into L-glutamate 5-semialdehyde and phosphate. The product spontaneously undergoes cyclization to form 1-pyrroline-5-carboxylate. The protein is Gamma-glutamyl phosphate reductase of Histophilus somni (strain 2336) (Haemophilus somnus).